Here is a 383-residue protein sequence, read N- to C-terminus: tRNA-specific 2-thiouridylase MnmA (383 aa).

ATP is bound by residues 29–36 and methionine 55; that span reads GMSGGVDS. The tract at residues 115 to 117 is interaction with target base in tRNA; the sequence is NPD. Catalysis depends on cysteine 120, which acts as the Nucleophile. Cysteine 120 and cysteine 217 are oxidised to a cystine. Residue glycine 145 coordinates ATP. The interval 167-169 is interaction with tRNA; that stretch reads KDQ. The active-site Cysteine persulfide intermediate is the cysteine 217. An interaction with tRNA region spans residues 329 to 330; that stretch reads RY.

This sequence belongs to the MnmA/TRMU family.

It is found in the cytoplasm. The catalysed reaction is S-sulfanyl-L-cysteinyl-[protein] + uridine(34) in tRNA + AH2 + ATP = 2-thiouridine(34) in tRNA + L-cysteinyl-[protein] + A + AMP + diphosphate + H(+). Its function is as follows. Catalyzes the 2-thiolation of uridine at the wobble position (U34) of tRNA, leading to the formation of s(2)U34. This chain is tRNA-specific 2-thiouridylase MnmA, found in Histophilus somni (strain 129Pt) (Haemophilus somnus).